Consider the following 192-residue polypeptide: Molybdenum cofactor cytidylyltransferase (192 aa).

Asp101 is a Mg(2+) binding site.

In terms of assembly, monomer. Interacts with the Moco-binding chaperone PaoD. It depends on Mg(2+) as a cofactor. Mn(2+) serves as cofactor.

The catalysed reaction is Mo-molybdopterin + CTP + H(+) = Mo-molybdopterin cytosine dinucleotide + diphosphate. In terms of biological role, transfers a CMP moiety from CTP to Mo-molybdopterin (Mo-MPT) cofactor (Moco or molybdenum cofactor) to form Mo-molybdopterin cytosine dinucleotide (Mo-MCD) cofactor. Is specific for CTP; other nucleotides such as ATP and GTP cannot be utilized. Is also able to convert MPT to MCD in the absence of molybdate, however, with only one catalytic turnover. The sequence is that of Molybdenum cofactor cytidylyltransferase (mocA) from Escherichia coli (strain K12).